The following is a 300-amino-acid chain: Type II methyltransferase M.XycI (300 aa).

The disordered stretch occupies residues 109–129 (RGYRAPDKKNPARAMDVRPDT). Positions 112–127 (RAPDKKNPARAMDVRP) are enriched in basic and acidic residues.

This sequence belongs to the N(4)/N(6)-methyltransferase family. N(4) subfamily.

The enzyme catalyses a 2'-deoxycytidine in DNA + S-adenosyl-L-methionine = an N(4)-methyl-2'-deoxycytidine in DNA + S-adenosyl-L-homocysteine + H(+). Its function is as follows. A beta subtype methylase, recognizes the double-stranded sequence 5'-CCCGGG-3', methylates C-2 on both strands, and protects the DNA from cleavage by the XcyI endonuclease. The sequence is that of Type II methyltransferase M.XycI (xcyIM) from Xanthomonas campestris pv. cyanopsidis.